Here is a 119-residue protein sequence, read N- to C-terminus: MYKMSTSELLKHIYDINLSYLLLAQRLINDEKASAMFRLGITDTMADALSQLTLPQMVKLAETNQLVCHFRFSDHNTIHHLTKESRVDDLQQIHTGILLSSHLLHELSLKDGSASKKRA.

The protein belongs to the FlhD family. In terms of assembly, homodimer; disulfide-linked. Forms a heterohexamer composed of two FlhC and four FlhD subunits. Each FlhC binds a FlhD dimer, forming a heterotrimer, and a hexamer assembles by dimerization of two heterotrimers.

It is found in the cytoplasm. Its function is as follows. Functions in complex with FlhC as a master transcriptional regulator that regulates transcription of several flagellar and non-flagellar operons by binding to their promoter region. Activates expression of class 2 flagellar genes, including fliA, which is a flagellum-specific sigma factor that turns on the class 3 genes. Also regulates genes whose products function in a variety of physiological pathways. The sequence is that of Flagellar transcriptional regulator FlhD from Yersinia enterocolitica.